Reading from the N-terminus, the 194-residue chain is Kallikrein-like enzyme LV-Ka (194 aa).

Cystine bridges form between Cys7–Cys99, Cys44–Cys192, Cys78–Cys146, Cys110–Cys125, and Cys136–Cys161. The Peptidase S1 domain maps to 36–185 (LNQEDKFICP…YTEWIQSIIA (150 aa)). The active-site Charge relay system is Ser140.

Belongs to the peptidase S1 family. Snake venom subfamily. In terms of assembly, monomer. In terms of processing, N-glycosylated. As to expression, expressed by the venom gland.

The protein resides in the secreted. With respect to regulation, completely inhibited by the serine protease inhibitors NPGB and PMSF, partially inhibited by benzamidines, and weakly or not inhibited by SBTI and EDTA. In terms of biological role, shows kallikrein-like activity, releasing bradykinin from kininogen. Also activates plasminogen, which is also a plasma kallikrein activity. Is active upon the kallikrein substrates S-2266 and S-2302, suggesting a preference for Arg in P1 position. In vivo, lowers blood pressure after intravenous injection in rat. The chain is Kallikrein-like enzyme LV-Ka from Lachesis muta muta (Bushmaster).